The chain runs to 368 residues: Putative glutamate--cysteine ligase 2 (368 aa).

The protein belongs to the glutamate--cysteine ligase type 2 family. YbdK subfamily.

The enzyme catalyses L-cysteine + L-glutamate + ATP = gamma-L-glutamyl-L-cysteine + ADP + phosphate + H(+). In terms of biological role, ATP-dependent carboxylate-amine ligase which exhibits weak glutamate--cysteine ligase activity. This chain is Putative glutamate--cysteine ligase 2, found in Pseudomonas putida (strain ATCC 47054 / DSM 6125 / CFBP 8728 / NCIMB 11950 / KT2440).